Consider the following 500-residue polypeptide: Probable serine carboxypeptidase CPVL (500 aa).

The signal sequence occupies residues 1-23 (MKVSLSFLLTILIVIITIKVNLS). N110 and N161 each carry an N-linked (GlcNAc...) asparagine glycan. Residue S233 is part of the active site. N333 and N360 each carry an N-linked (GlcNAc...) asparagine glycan. Catalysis depends on residues D414 and H474.

It belongs to the peptidase S10 family.

It is found in the secreted. In terms of biological role, may be involved in the digestion of phagocytosed particles in the lysosome, participation in an inflammatory protease cascade, and trimming of peptides for antigen presentation. The sequence is that of Probable serine carboxypeptidase CPVL (cpvl) from Dictyostelium discoideum (Social amoeba).